Reading from the N-terminus, the 218-residue chain is MPGVVFDLDGTLVHSAPDIHAAVNRALAEEGAEPFSLAEITGFIGNGVPVLIKRVLAARGETPDGHRHAEMQDRFMKHYEADPTALTSVYPGAEAALRHLHSEGWRIALCTNKPYAASRQILSNFGILDLFDAIVGGDCLPQRKPDPAPLRAAAAALTEEVVLYVGDSEVDAATAEAAGLRFALFTEGYRHAPVHDLPHHGLFSHHDELPDLLRHLLA.

The Nucleophile role is filled by D7. D7, D9, and D167 together coordinate Mg(2+).

It belongs to the HAD-like hydrolase superfamily. CbbY/CbbZ/Gph/YieH family. Requires Mg(2+) as cofactor.

It carries out the reaction 2-phosphoglycolate + H2O = glycolate + phosphate. It participates in organic acid metabolism; glycolate biosynthesis; glycolate from 2-phosphoglycolate: step 1/1. In terms of biological role, specifically catalyzes the dephosphorylation of 2-phosphoglycolate. Is involved in the dissimilation of the intracellular 2-phosphoglycolate formed during the DNA repair of 3'-phosphoglycolate ends, a major class of DNA lesions induced by oxidative stress. The polypeptide is Phosphoglycolate phosphatase (Cereibacter sphaeroides (strain ATCC 17025 / ATH 2.4.3) (Rhodobacter sphaeroides)).